A 415-amino-acid polypeptide reads, in one-letter code: MKGSYKSRWVIVIVVVIAAIAAFWFWQGRNDSQSAAPGATKQAQQSPAGGRRGMRAGPLAPVQAATAVEQAVPRYLTGLGTITAANTVTVRSRVDGQLMALHFQEGQQVKAGDLLAEIDPSQFKVALAQAQGQLAKDKATLANARRDLARYQQLAKTNLVSRQELDAQQALVSETEGTIKADEASVASAQLQLDWSRITAPVDGRVGLKQVDVGNQISSGDTTGIVVITQTHPIDLVFTLPESDIATVVQAQKAGKPLVVEAWDRTNSKKLSEGTLLSLDNQIDATTGTIKVKARFNNQDDALFPNQFVNARMLVDTEQNAVVIPTAALQMGNEGHFVWVLNSENKVSKHLVTPGIQDSQKVVIRAGISAGDRVVTDGIDRLTEGAKVEVVEAQSATTPEEKATSREYAKKGARS.

Residues 1–21 (MKGSYKSRWVIVIVVVIAAIA) form the signal peptide. Residues 31–46 (DSQSAAPGATKQAQQS) are compositionally biased toward polar residues. 2 disordered regions span residues 31 to 56 (DSQSAAPGATKQAQQSPAGGRRGMRA) and 392 to 415 (EAQSATTPEEKATSREYAKKGARS). Positions 399-415 (PEEKATSREYAKKGARS) are enriched in basic and acidic residues.

The protein belongs to the membrane fusion protein (MFP) (TC 8.A.1) family. Part of a tripartite efflux system composed of MdtA, MdtB and MdtC.

Its subcellular location is the cell inner membrane. The MdtABC tripartite complex confers resistance against novobiocin and deoxycholate. This chain is Multidrug resistance protein MdtA, found in Escherichia coli O6:K15:H31 (strain 536 / UPEC).